A 182-amino-acid chain; its full sequence is Isopentenyl-diphosphate Delta-isomerase (182 aa).

Mn(2+) is bound by residues histidine 25 and histidine 32. Residues 30–164 (LLHLAFSSWL…PWAFSPWMVM (135 aa)) form the Nudix hydrolase domain. Cysteine 67 is an active-site residue. Histidine 69 serves as a coordination point for Mn(2+). Glutamate 87 contributes to the Mg(2+) binding site. 2 residues coordinate Mn(2+): glutamate 114 and glutamate 116. Glutamate 116 is an active-site residue.

It belongs to the IPP isomerase type 1 family. In terms of assembly, homodimer. Requires Mg(2+) as cofactor. It depends on Mn(2+) as a cofactor.

The protein localises to the cytoplasm. The enzyme catalyses isopentenyl diphosphate = dimethylallyl diphosphate. It functions in the pathway isoprenoid biosynthesis; dimethylallyl diphosphate biosynthesis; dimethylallyl diphosphate from isopentenyl diphosphate: step 1/1. Functionally, catalyzes the 1,3-allylic rearrangement of the homoallylic substrate isopentenyl (IPP) to its highly electrophilic allylic isomer, dimethylallyl diphosphate (DMAPP). This is Isopentenyl-diphosphate Delta-isomerase from Escherichia coli (strain ATCC 8739 / DSM 1576 / NBRC 3972 / NCIMB 8545 / WDCM 00012 / Crooks).